Reading from the N-terminus, the 860-residue chain is Valine--tRNA ligase (860 aa).

The short motif at 43–53 (PTVSGALHVGH) is the 'HIGH' region element. The tract at residues 469-491 (LPVDPSSDAPTGYQESQRNQPGG) is disordered. The 'KMSKS' region motif lies at 574–578 (KMSKS). Lys577 is an ATP binding site.

It belongs to the class-I aminoacyl-tRNA synthetase family. ValS type 2 subfamily. Monomer.

It localises to the cytoplasm. The catalysed reaction is tRNA(Val) + L-valine + ATP = L-valyl-tRNA(Val) + AMP + diphosphate. In terms of biological role, catalyzes the attachment of valine to tRNA(Val). As ValRS can inadvertently accommodate and process structurally similar amino acids such as threonine, to avoid such errors, it has a 'posttransfer' editing activity that hydrolyzes mischarged Thr-tRNA(Val) in a tRNA-dependent manner. The protein is Valine--tRNA ligase of Salinispora tropica (strain ATCC BAA-916 / DSM 44818 / JCM 13857 / NBRC 105044 / CNB-440).